An 86-amino-acid chain; its full sequence is MEFKIMSKVDNIEQKVIKVIADNQGKKIEEISVDSRFAEDLGVDSLSTVEIMMEIEKEFGVDVPDEEATKIKKVADVVNYIKEHKS.

In terms of domain architecture, Carrier spans 7–85; the sequence is SKVDNIEQKV…DVVNYIKEHK (79 aa). Ser-45 bears the O-(pantetheine 4'-phosphoryl)serine mark.

It belongs to the acyl carrier protein (ACP) family. In terms of processing, 4'-phosphopantetheine is transferred from CoA to a specific serine of apo-ACP by AcpS. This modification is essential for activity because fatty acids are bound in thioester linkage to the sulfhydryl of the prosthetic group.

The protein resides in the cytoplasm. It functions in the pathway lipid metabolism; fatty acid biosynthesis. Carrier of the growing fatty acid chain in fatty acid biosynthesis. The chain is Acyl carrier protein from Rickettsia bellii (strain RML369-C).